Consider the following 484-residue polypeptide: Cobyric acid synthase (484 aa).

Residues 248–435 (VLKVIVPVLP…LHGLFEGSQS (188 aa)) enclose the GATase cobBQ-type domain. Cysteine 329 acts as the Nucleophile in catalysis. Histidine 427 is an active-site residue.

It belongs to the CobB/CobQ family. CobQ subfamily.

Its pathway is cofactor biosynthesis; adenosylcobalamin biosynthesis. Catalyzes amidations at positions B, D, E, and G on adenosylcobyrinic A,C-diamide. NH(2) groups are provided by glutamine, and one molecule of ATP is hydrogenolyzed for each amidation. This Pseudomonas putida (strain ATCC 700007 / DSM 6899 / JCM 31910 / BCRC 17059 / LMG 24140 / F1) protein is Cobyric acid synthase.